The primary structure comprises 215 residues: Pyridoxine/pyridoxamine 5'-phosphate oxidase (215 aa).

Residues 9–12 (RRDY) and lysine 69 contribute to the substrate site. FMN is bound by residues 64 to 69 (RVLLLK), 79 to 80 (FT), lysine 86, and glutamine 108. Substrate contacts are provided by tyrosine 126, arginine 130, and serine 134. Residues 143–144 (QS) and tryptophan 188 each bind FMN. 194–196 (RLH) provides a ligand contact to substrate. Arginine 198 serves as a coordination point for FMN.

It belongs to the pyridoxamine 5'-phosphate oxidase family. In terms of assembly, homodimer. FMN is required as a cofactor.

The enzyme catalyses pyridoxamine 5'-phosphate + O2 + H2O = pyridoxal 5'-phosphate + H2O2 + NH4(+). The catalysed reaction is pyridoxine 5'-phosphate + O2 = pyridoxal 5'-phosphate + H2O2. It functions in the pathway cofactor metabolism; pyridoxal 5'-phosphate salvage; pyridoxal 5'-phosphate from pyridoxamine 5'-phosphate: step 1/1. The protein operates within cofactor metabolism; pyridoxal 5'-phosphate salvage; pyridoxal 5'-phosphate from pyridoxine 5'-phosphate: step 1/1. Its function is as follows. Catalyzes the oxidation of either pyridoxine 5'-phosphate (PNP) or pyridoxamine 5'-phosphate (PMP) into pyridoxal 5'-phosphate (PLP). In Pseudomonas putida (strain GB-1), this protein is Pyridoxine/pyridoxamine 5'-phosphate oxidase.